A 270-amino-acid polypeptide reads, in one-letter code: Urease accessory protein UreD (270 aa).

Belongs to the UreD family. UreD, UreF and UreG form a complex that acts as a GTP-hydrolysis-dependent molecular chaperone, activating the urease apoprotein by helping to assemble the nickel containing metallocenter of UreC. The UreE protein probably delivers the nickel.

It localises to the cytoplasm. Its function is as follows. Required for maturation of urease via the functional incorporation of the urease nickel metallocenter. This is Urease accessory protein UreD from Beijerinckia indica subsp. indica (strain ATCC 9039 / DSM 1715 / NCIMB 8712).